Reading from the N-terminus, the 184-residue chain is Crossover junction endodeoxyribonuclease RuvC (184 aa).

Catalysis depends on residues aspartate 7, glutamate 68, and aspartate 141. 3 residues coordinate Mg(2+): aspartate 7, glutamate 68, and aspartate 141.

The protein belongs to the RuvC family. As to quaternary structure, homodimer which binds Holliday junction (HJ) DNA. The HJ becomes 2-fold symmetrical on binding to RuvC with unstacked arms; it has a different conformation from HJ DNA in complex with RuvA. In the full resolvosome a probable DNA-RuvA(4)-RuvB(12)-RuvC(2) complex forms which resolves the HJ. Mg(2+) serves as cofactor.

The protein localises to the cytoplasm. The catalysed reaction is Endonucleolytic cleavage at a junction such as a reciprocal single-stranded crossover between two homologous DNA duplexes (Holliday junction).. The RuvA-RuvB-RuvC complex processes Holliday junction (HJ) DNA during genetic recombination and DNA repair. Endonuclease that resolves HJ intermediates. Cleaves cruciform DNA by making single-stranded nicks across the HJ at symmetrical positions within the homologous arms, yielding a 5'-phosphate and a 3'-hydroxyl group; requires a central core of homology in the junction. The consensus cleavage sequence is 5'-(A/T)TT(C/G)-3'. Cleavage occurs on the 3'-side of the TT dinucleotide at the point of strand exchange. HJ branch migration catalyzed by RuvA-RuvB allows RuvC to scan DNA until it finds its consensus sequence, where it cleaves and resolves the cruciform DNA. The sequence is that of Crossover junction endodeoxyribonuclease RuvC from Mycobacterium ulcerans (strain Agy99).